We begin with the raw amino-acid sequence, 831 residues long: Histone acetyltransferase SAS3 (831 aa).

Positions 267–573 (VWFSQIEYIV…VKYDKLLWEP (307 aa)) constitute an MYST-type HAT domain. Residues 300–325 (VFICEFCLKYMTSRYTFYRHQLKCLT) form a C2HC MYST-type zinc finger. Lys-367 is subject to N6-acetyllysine; by autocatalysis. Acetyl-CoA-binding positions include 419-421 (ILT) and 426-432 (QRKGYGQ). Residue Glu-452 is the Proton donor/acceptor of the active site. Position 456 (Ser-456) interacts with acetyl-CoA. Disordered regions lie at residues 614 to 639 (ENYN…KTSK) and 719 to 813 (PLGN…SHIR). Residues 621–633 (AHNKRRRRRRRSS) are compositionally biased toward basic residues. Acidic residues-rich tracts occupy residues 736-746 (EQDEVENDVDT) and 755-794 (KEDE…DDDE). The span at 795–812 (DGKRKGQEQDENDIESHI) shows a compositional bias: basic and acidic residues.

Belongs to the MYST (SAS/MOZ) family. In terms of assembly, component of the NuA3 histone acetyltransferase (HAT) complex. The NuA3 HAT complex has 2 functionally distinct forms that participate in transcription. The NuA3a HAT complex is composed of at least NTO1, SAS3, TAF14, YNG1 and EAF6. The NuA3b HAT complex contains an additional subunit, PDP3. SAS3 interacts with CDC68/SPT16. In terms of processing, autoacetylation at Lys-367 is required for proper function.

The protein resides in the nucleus. It carries out the reaction L-lysyl-[protein] + acetyl-CoA = N(6)-acetyl-L-lysyl-[protein] + CoA + H(+). In terms of biological role, catalytic component of the NuA3 histone acetyltransferase complex, that acetylates H3K14. The NuA3 HAT complex has 2 functionally distinct forms. NuA3a binds H3K4me3, through the PHD finger of YNG1, and acetylates H3K14 at the promoter region of actively transcribed genes to promote transcription initiation. NuA3b binds H3K36me3 at the coding regions of actively transcribed genes, through the PWWP domain of PDP3, and coordinates transcription elongation. In vitro, SAS3 acetylates free histones H3 and H4. It is involved in silencing the HMR locus. The chain is Histone acetyltransferase SAS3 from Saccharomyces cerevisiae (strain ATCC 204508 / S288c) (Baker's yeast).